The sequence spans 584 residues: 2-isopropylmalate synthase (584 aa).

In terms of domain architecture, Pyruvate carboxyltransferase spans 45–323 (PRWLSTDLRD…SPNLDFSKLD (279 aa)). Residues aspartate 54, histidine 262, histidine 264, and asparagine 298 each contribute to the a divalent metal cation site.

It belongs to the alpha-IPM synthase/homocitrate synthase family. LeuA type 2 subfamily. Homodimer. Requires a divalent metal cation as cofactor.

It carries out the reaction 3-methyl-2-oxobutanoate + acetyl-CoA + H2O = (2S)-2-isopropylmalate + CoA + H(+). It participates in amino-acid biosynthesis; L-leucine biosynthesis; L-leucine from 3-methyl-2-oxobutanoate: step 1/4. Its function is as follows. Catalyzes the condensation of the acetyl group of acetyl-CoA with 3-methyl-2-oxobutanoate (2-oxoisovalerate) to form 3-carboxy-3-hydroxy-4-methylpentanoate (2-isopropylmalate). The sequence is that of 2-isopropylmalate synthase (leu3) from Schizosaccharomyces pombe (strain 972 / ATCC 24843) (Fission yeast).